Reading from the N-terminus, the 151-residue chain is U1 small nuclear ribonucleoprotein C (151 aa).

The Matrin-type zinc-finger motif lies at 4-36 (FYCEYCSIYLTHSSPAGRKQHSQGRKHISAKVE).

The protein belongs to the U1 small nuclear ribonucleoprotein C family. U1 snRNP is composed of the 7 core Sm proteins B/B', D1, D2, D3, E, F and G that assemble in a heptameric protein ring on the Sm site of the small nuclear RNA to form the core snRNP, and at least 3 U1 snRNP-specific proteins U1-70K, U1-A and U1-C. U1-C interacts with U1 snRNA and the 5' splice-site region of the pre-mRNA.

It localises to the nucleus. Its function is as follows. Component of the spliceosomal U1 snRNP, which is essential for recognition of the pre-mRNA 5' splice-site and the subsequent assembly of the spliceosome. U1-C is directly involved in initial 5' splice-site recognition for both constitutive and regulated alternative splicing. The interaction with the 5' splice-site seems to precede base-pairing between the pre-mRNA and the U1 snRNA. Stimulates commitment or early (E) complex formation by stabilizing the base pairing of the 5' end of the U1 snRNA and the 5' splice-site region. In Theileria annulata, this protein is U1 small nuclear ribonucleoprotein C.